Reading from the N-terminus, the 238-residue chain is Ribose-5-phosphate isomerase A (238 aa).

Substrate is bound by residues 30 to 33 (SGST), 87 to 90 (DGAD), and 100 to 103 (KGGG). E109 (proton acceptor) is an active-site residue. K127 is a binding site for substrate.

It belongs to the ribose 5-phosphate isomerase family. Homodimer.

The catalysed reaction is aldehydo-D-ribose 5-phosphate = D-ribulose 5-phosphate. It functions in the pathway carbohydrate degradation; pentose phosphate pathway; D-ribose 5-phosphate from D-ribulose 5-phosphate (non-oxidative stage): step 1/1. Its function is as follows. Catalyzes the reversible conversion of ribose-5-phosphate to ribulose 5-phosphate. The sequence is that of Ribose-5-phosphate isomerase A from Synechococcus sp. (strain WH7803).